The primary structure comprises 75 residues: Cytochrome c oxidase subunit 6C (75 aa).

Over 1-13 the chain is Mitochondrial matrix; it reads MAPEVLPKPRMRG. A helical transmembrane segment spans residues 14–54; the sequence is LLARRLRNHMAVAFVLSLGVAALYKFRVADQRKKAYADFYR. Over 55–75 the chain is Mitochondrial intermembrane; it reads NYDVMKDFEEMRKAGIFQSVK.

It belongs to the cytochrome c oxidase subunit 6c family. Component of the cytochrome c oxidase (complex IV, CIV), a multisubunit enzyme composed of 14 subunits. The complex is composed of a catalytic core of 3 subunits MT-CO1, MT-CO2 and MT-CO3, encoded in the mitochondrial DNA, and 11 supernumerary subunits COX4I1 (or COX4I2), COX5A, COX5B, COX6A1 (or COX6A2), COX6B1 (or COX6B2), COX6C, COX7A2 (or COX7A1), COX7B, COX7C, COX8A and NDUFA4, which are encoded in the nuclear genome. The complex exists as a monomer or a dimer and forms supercomplexes (SCs) in the inner mitochondrial membrane with NADH-ubiquinone oxidoreductase (complex I, CI) and ubiquinol-cytochrome c oxidoreductase (cytochrome b-c1 complex, complex III, CIII), resulting in different assemblies (supercomplex SCI(1)III(2)IV(1) and megacomplex MCI(2)III(2)IV(2)).

The protein localises to the mitochondrion inner membrane. Its pathway is energy metabolism; oxidative phosphorylation. Component of the cytochrome c oxidase, the last enzyme in the mitochondrial electron transport chain which drives oxidative phosphorylation. The respiratory chain contains 3 multisubunit complexes succinate dehydrogenase (complex II, CII), ubiquinol-cytochrome c oxidoreductase (cytochrome b-c1 complex, complex III, CIII) and cytochrome c oxidase (complex IV, CIV), that cooperate to transfer electrons derived from NADH and succinate to molecular oxygen, creating an electrochemical gradient over the inner membrane that drives transmembrane transport and the ATP synthase. Cytochrome c oxidase is the component of the respiratory chain that catalyzes the reduction of oxygen to water. Electrons originating from reduced cytochrome c in the intermembrane space (IMS) are transferred via the dinuclear copper A center (CU(A)) of subunit 2 and heme A of subunit 1 to the active site in subunit 1, a binuclear center (BNC) formed by heme A3 and copper B (CU(B)). The BNC reduces molecular oxygen to 2 water molecules using 4 electrons from cytochrome c in the IMS and 4 protons from the mitochondrial matrix. This chain is Cytochrome c oxidase subunit 6C (COX6C), found in Homo sapiens (Human).